Reading from the N-terminus, the 66-residue chain is Large ribosomal subunit protein uL29 (66 aa).

Belongs to the universal ribosomal protein uL29 family.

The protein is Large ribosomal subunit protein uL29 of Thermococcus sibiricus (strain DSM 12597 / MM 739).